A 685-amino-acid polypeptide reads, in one-letter code: MVWLWTLPWTFILVALIPLATAKSPDVHHSLQQLKKRDDDSLRDENCQAWIAPVWPGMSHMMVAATRAERDVSYNVSIDQLTYKGAELTPLVFNKYGYTQDGIFKSMDLLKSGMTSLGLDVYWNNKEQYWQLCPVIFPSSAEPGTPVLLQRRLTTDIVTCDQNATLSYFLAALSNHVNVTDNNLDVDLISLKLNLRTVETPIQSNSSSQRQKRQFRETSTSVTQLASSVLSSLLNASKTTRMESTGSFSNSDSNSSSNSSRMSNSTESTRTTSSTESASSTSTTPSTYTTGPQMLGNIVGSSYIGPRLYTPKDLHRDREAEPPRTYDYQGLSNRGFPLAHYILLEMKARVMVSISQNDQPDGYGWGSADQDVIFTKQALLGSSDPENTNENIAYENLQECIRLDPQFLQSINLTGAASWRTYSSTQQDPISNVSFQEFINCGLSPSINNTLAPGETLQGLMTESLWSWAEDEPSKCHNESVTRTQDRNTGLVAWNCAVLMPDGWHVANCYDTHYPLCRQGELAYNWAVGTQKVNYFDTAQEKNICPPGYTFSLPRTALQNIAAKITVRGVSGKTRVYKGGDTTDPDSYDTIDYGNTAFPVWIDLNSISQEDCWVSGGPTARCPYRTVQSHSVSVALLTVASAVCAGVAAAIILLQMDTQPIKKNSGRWRRLMSNFKKSEYESVPA.

The signal sequence occupies residues Met-1–Ala-22. The Extracellular segment spans residues Lys-23 to Ser-633. Residues Asn-75, Asn-163, Asn-178, Asn-205, Asn-235, Asn-254, Asn-258, and Asn-264 are each glycosylated (N-linked (GlcNAc...) asparagine). The segment at Pro-201–Ser-221 is disordered. 2 disordered regions span residues Lys-238 to Leu-295 and Tyr-309 to Tyr-328. Over residues Ser-244–Thr-290 the composition is skewed to low complexity. A compositionally biased stretch (basic and acidic residues) spans Thr-310 to Arg-324. 4 N-linked (GlcNAc...) asparagine glycosylation sites follow: Asn-412, Asn-432, Asn-448, and Asn-478. A helical transmembrane segment spans residues Val-634–Leu-654. Residues Gln-655–Ala-685 lie on the Cytoplasmic side of the membrane.

It belongs to the MTC6 family.

The protein resides in the membrane. In terms of biological role, may be involved in telomere capping. This Yarrowia lipolytica (strain CLIB 122 / E 150) (Yeast) protein is Maintenance of telomere capping protein 6 (MTC6).